The primary structure comprises 720 residues: Protein-glutamine gamma-glutamyltransferase 5 (720 aa).

Ala-2 is subject to N-acetylalanine. Catalysis depends on residues Cys-278, His-337, and Asp-360. Residues Asn-400, Asp-402, Glu-448, and Glu-453 each coordinate Ca(2+). The interval 470-499 (HGSQRGAELQPSRPTSLSQDSPRSLHTPSL) is disordered. A compositionally biased stretch (polar residues) spans 481–496 (SRPTSLSQDSPRSLHT).

The protein belongs to the transglutaminase superfamily. Transglutaminase family. The cofactor is Ca(2+). In terms of tissue distribution, expressed in foreskin keratinocytes.

Its subcellular location is the cytoplasm. The enzyme catalyses L-glutaminyl-[protein] + L-lysyl-[protein] = [protein]-L-lysyl-N(6)-5-L-glutamyl-[protein] + NH4(+). Its function is as follows. Catalyzes the cross-linking of proteins and the conjugation of polyamines to proteins. Contributes to the formation of the cornified cell envelope of keratinocytes. This is Protein-glutamine gamma-glutamyltransferase 5 (TGM5) from Homo sapiens (Human).